The primary structure comprises 1935 residues: Myosin heavy chain, fast skeletal muscle (1935 aa).

Residues 32–81 (DAKTAFFVVDPDEMYLKGTLVSKEGGKATVKTHSGKTVTVKEDEIFPMNP) enclose the Myosin N-terminal SH3-like domain. The region spanning 85-779 (DKIEDMAMMT…LLGALEEMRD (695 aa)) is the Myosin motor domain. Residue Lys129 is modified to N6,N6,N6-trimethyllysine. 178-185 (GESGAGKT) provides a ligand contact to ATP. 2 actin-binding regions span residues 659–681 (LMTN…ESKT) and 761–775 (HTKV…GALE). The IQ domain maps to 782 to 811 (LALLVTMTQALCRGYVMRKEFVKMMERRES). A hinge region spans residues 812–839 (IYSIQYNIRSFMNVKHWPWMKLYFKIKP). Residues 840–1935 (LLKSAETEKE…RDAGKSKDEE (1096 aa)) are a coiled coil. Disordered stretches follow at residues 1589–1608 (RNSQ…EVRS) and 1902–1935 (HELE…KDEE). A compositionally biased stretch (polar residues) spans 1592–1603 (QRVIDSMQSTLD). 2 stretches are compositionally biased toward basic and acidic residues: residues 1902–1913 (HELEEAQERADV) and 1924–1935 (KSRDAGKSKDEE).

This sequence belongs to the TRAFAC class myosin-kinesin ATPase superfamily. Myosin family. As to quaternary structure, muscle myosin is a hexameric protein that consists of 2 heavy chain subunits (MHC), 2 alkali light chain subunits (MLC) and 2 regulatory light chain subunits (MLC-2).

The protein localises to the cytoplasm. It localises to the myofibril. In terms of biological role, muscle contraction. This Cyprinus carpio (Common carp) protein is Myosin heavy chain, fast skeletal muscle.